A 258-amino-acid polypeptide reads, in one-letter code: Imidazole glycerol phosphate synthase subunit HisF (258 aa).

Active-site residues include D11 and D130.

It belongs to the HisA/HisF family. In terms of assembly, heterodimer of HisH and HisF.

It localises to the cytoplasm. The catalysed reaction is 5-[(5-phospho-1-deoxy-D-ribulos-1-ylimino)methylamino]-1-(5-phospho-beta-D-ribosyl)imidazole-4-carboxamide + L-glutamine = D-erythro-1-(imidazol-4-yl)glycerol 3-phosphate + 5-amino-1-(5-phospho-beta-D-ribosyl)imidazole-4-carboxamide + L-glutamate + H(+). It participates in amino-acid biosynthesis; L-histidine biosynthesis; L-histidine from 5-phospho-alpha-D-ribose 1-diphosphate: step 5/9. Functionally, IGPS catalyzes the conversion of PRFAR and glutamine to IGP, AICAR and glutamate. The HisF subunit catalyzes the cyclization activity that produces IGP and AICAR from PRFAR using the ammonia provided by the HisH subunit. The chain is Imidazole glycerol phosphate synthase subunit HisF from Prochlorococcus marinus (strain MIT 9211).